The following is a 104-amino-acid chain: Growth-regulated protein homolog (104 aa).

Residues 1–31 form the signal peptide; the sequence is MAPAATAAAPRLLRAALLLLLLVAAGRRAAG. 2 cysteine pairs are disulfide-bonded: Cys40–Cys66 and Cys42–Cys82.

The protein belongs to the intercrine alpha (chemokine CxC) family.

It localises to the secreted. Its function is as follows. Plays a role in monocyte adhesion to the endothelium. This chain is Growth-regulated protein homolog, found in Oryctolagus cuniculus (Rabbit).